Here is a 24-residue protein sequence, read N- to C-terminus: Skin secreted peptide 1 (24 aa).

Expressed by the skin glands.

It is found in the secreted. The protein is Skin secreted peptide 1 of Ascaphus truei (Coastal tailed frog).